The primary structure comprises 406 residues: Phosphorylase b kinase gamma catalytic chain, liver/testis isoform (406 aa).

The Protein kinase domain maps to 24 to 291 (YDPKDVIGRG…AEQALQHPFF (268 aa)). ATP-binding positions include 30–38 (IGRGVSSVV) and K53. The active-site Proton acceptor is the D153. The segment at 306-330 (QRFRVAVWTVLAAGRVALSAHRIRP) is calmodulin-binding (domain-N). The tract at residues 346-370 (VRRLIDNCAFRLYGHWVKKGEQQNR) is calmodulin-binding (domain-C).

It belongs to the protein kinase superfamily. CAMK Ser/Thr protein kinase family. As to quaternary structure, hexadecamer of 4 heterotetramers, each composed of alpha, beta, gamma, and delta subunits. Alpha (PHKA1 or PHKA2) and beta (PHKB) are regulatory subunits, gamma (PHKG1 or PHKG2) is the catalytic subunit, and delta is calmodulin.

The enzyme catalyses 2 ATP + phosphorylase b = 2 ADP + phosphorylase a.. Catalytic subunit of the phosphorylase b kinase (PHK), which mediates the neural and hormonal regulation of glycogen breakdown (glycogenolysis) by phosphorylating and thereby activating glycogen phosphorylase. May regulate glycogeneolysis in the testis. In vitro, phosphorylates PYGM. The chain is Phosphorylase b kinase gamma catalytic chain, liver/testis isoform (PHKG2) from Bos taurus (Bovine).